A 326-amino-acid chain; its full sequence is Myeloid protein 1 (326 aa).

Residues 1 to 18 (MPALSLIALLSLVSTAFA) form the signal peptide. Repeat copies occupy residues 28 to 162 (QQGR…SDPT) and 177 to 312 (QQDA…SDPT). Cystine bridges form between Cys-37–Cys-74, Cys-48–Cys-53, and Cys-113–Cys-156. Positions 67, 71, and 152 each coordinate Zn(2+). A disordered region spans residues 307-326 (DRSDPTSNLERGKGESEMEV).

The protein belongs to the LECT2/MIM-1 family. In terms of processing, substrate for arginine-specific ADP-ribosyltransferase.

Its subcellular location is the cytoplasmic granule. The chain is Myeloid protein 1 (MIM1) from Gallus gallus (Chicken).